The primary structure comprises 237 residues: Sugar fermentation stimulation protein homolog (237 aa).

This sequence belongs to the SfsA family.

The polypeptide is Sugar fermentation stimulation protein homolog (Pseudomonas putida (strain ATCC 700007 / DSM 6899 / JCM 31910 / BCRC 17059 / LMG 24140 / F1)).